Here is a 309-residue protein sequence, read N- to C-terminus: tRNA dimethylallyltransferase (309 aa).

9-16 (GPTAIGKT) contributes to the ATP binding site. 11 to 16 (TAIGKT) is a binding site for substrate. Interaction with substrate tRNA stretches follow at residues 34-37 (DSRQ) and 164-168 (QRMMR).

This sequence belongs to the IPP transferase family. Monomer. Mg(2+) is required as a cofactor.

The enzyme catalyses adenosine(37) in tRNA + dimethylallyl diphosphate = N(6)-dimethylallyladenosine(37) in tRNA + diphosphate. Catalyzes the transfer of a dimethylallyl group onto the adenine at position 37 in tRNAs that read codons beginning with uridine, leading to the formation of N6-(dimethylallyl)adenosine (i(6)A). This Flavobacterium johnsoniae (strain ATCC 17061 / DSM 2064 / JCM 8514 / BCRC 14874 / CCUG 350202 / NBRC 14942 / NCIMB 11054 / UW101) (Cytophaga johnsonae) protein is tRNA dimethylallyltransferase.